Here is a 393-residue protein sequence, read N- to C-terminus: 1-deoxy-D-xylulose 5-phosphate reductoisomerase (393 aa).

The NADPH site is built by Thr10, Gly11, Ser12, Ile13, Arg37, and Asn124. Lys125 lines the 1-deoxy-D-xylulose 5-phosphate pocket. Residue Glu126 coordinates NADPH. Residue Asp150 participates in Mn(2+) binding. 1-deoxy-D-xylulose 5-phosphate is bound by residues Ser151, Glu152, Ser182, and His205. Mn(2+) is bound at residue Glu152. NADPH is bound at residue Gly211. 1-deoxy-D-xylulose 5-phosphate is bound by residues Ser218, Asn223, Lys224, and Glu227. Glu227 contacts Mn(2+).

This sequence belongs to the DXR family. It depends on Mg(2+) as a cofactor. Mn(2+) serves as cofactor.

It carries out the reaction 2-C-methyl-D-erythritol 4-phosphate + NADP(+) = 1-deoxy-D-xylulose 5-phosphate + NADPH + H(+). It participates in isoprenoid biosynthesis; isopentenyl diphosphate biosynthesis via DXP pathway; isopentenyl diphosphate from 1-deoxy-D-xylulose 5-phosphate: step 1/6. Functionally, catalyzes the NADPH-dependent rearrangement and reduction of 1-deoxy-D-xylulose-5-phosphate (DXP) to 2-C-methyl-D-erythritol 4-phosphate (MEP). The polypeptide is 1-deoxy-D-xylulose 5-phosphate reductoisomerase (Nitrosococcus oceani (strain ATCC 19707 / BCRC 17464 / JCM 30415 / NCIMB 11848 / C-107)).